The chain runs to 267 residues: 2-keto-3-deoxy-L-rhamnonate aldolase (267 aa).

H49 acts as the Proton acceptor in catalysis. Q151 is a binding site for substrate. Position 153 (E153) interacts with Mg(2+). A178 and D179 together coordinate substrate. Position 179 (D179) interacts with Mg(2+).

This sequence belongs to the HpcH/HpaI aldolase family. KDR aldolase subfamily. In terms of assembly, homohexamer. The cofactor is Mg(2+).

The catalysed reaction is 2-dehydro-3-deoxy-L-rhamnonate = (S)-lactaldehyde + pyruvate. In terms of biological role, catalyzes the reversible retro-aldol cleavage of 2-keto-3-deoxy-L-rhamnonate (KDR) to pyruvate and lactaldehyde. The chain is 2-keto-3-deoxy-L-rhamnonate aldolase from Escherichia coli O157:H7.